Reading from the N-terminus, the 139-residue chain is Large-conductance mechanosensitive channel 1 (139 aa).

The next 3 helical transmembrane spans lie at 8–28 (FISK…AAFG), 30–50 (IVDS…FGGL), and 81–101 (GSFI…FLMV).

It belongs to the MscL family. In terms of assembly, homopentamer.

It is found in the cell inner membrane. Its function is as follows. Channel that opens in response to stretch forces in the membrane lipid bilayer. May participate in the regulation of osmotic pressure changes within the cell. In Mesorhizobium japonicum (strain LMG 29417 / CECT 9101 / MAFF 303099) (Mesorhizobium loti (strain MAFF 303099)), this protein is Large-conductance mechanosensitive channel 1.